Consider the following 315-residue polypeptide: Calcium homeostasis modulator protein 4 (315 aa).

At 1–14 (MSPDLNCISSSLLR) the chain is on the cytoplasmic side. The helical transmembrane segment at 15-37 (SEPCINSLIAILTVCGQQLFSSY) threads the bilayer. Over 38–48 (TFSCPCQVGKN) the chain is Extracellular. Intrachain disulfides connect Cys41–Cys132 and Cys43–Cys163. Residues 49-71 (FYYGSAFLVVPALILLIAGYALR) form a helical membrane-spanning segment. Residues 72-104 (GQMWTVASEYCCCSCTPPYRRSSPLERRLACLM) are Cytoplasmic-facing. A helical membrane pass occupies residues 105 to 130 (FFDITGRALVAPLTWLTVTLLTGTYY). Residues 131–184 (ECAASEFASVDQYPMFANVTPSKREEMLAGFPCYTSAPSDVIPIRDEVALLHRY) lie on the Extracellular side of the membrane. The helical transmembrane segment at 185-208 (QSQMLGWILVVLATIALLLSKCLA) threads the bilayer. Residues 209–315 (RCCSPLTSLQ…DRQEGIEMKP (107 aa)) are Cytoplasmic-facing.

This sequence belongs to the CALHM family. Oligomerizes to form decameric and undecameric channels. Two hemichannels can assemble in a tail-to-tail manner to form a gap junction.

Its subcellular location is the cell membrane. In terms of biological role, may assemble to form gap junction channel-like structures involved in intercellular communication. Channel gating and ion conductance are likely regulated by membrane lipids rather than by membrane depolarization or extracellular calcium levels. This chain is Calcium homeostasis modulator protein 4, found in Mus musculus (Mouse).